A 406-amino-acid polypeptide reads, in one-letter code: Fructose-1,6-bisphosphatase, chloroplastic (406 aa).

Residues 1–47 (MAAAATTSSHLLLLSRQQAAASLQCGLSFRRQPGRLAGGSSAPSVRC) constitute a chloroplast transit peptide. Residues E128, E157, D178, L180, and D181 each coordinate Mg(2+). 181-184 (DGSS) provides a ligand contact to substrate. Residues C222 and C227 are joined by a disulfide bond. Residues N286, Y318, Y336, Y338, and K348 each coordinate substrate. Mg(2+) is bound at residue E354.

It belongs to the FBPase class 1 family. As to quaternary structure, homotetramer. Requires Mg(2+) as cofactor.

Its subcellular location is the plastid. The protein localises to the chloroplast stroma. The enzyme catalyses beta-D-fructose 1,6-bisphosphate + H2O = beta-D-fructose 6-phosphate + phosphate. It participates in carbohydrate biosynthesis; Calvin cycle. Inhibited by sodium chloride. Functionally, catalyzes the irreversible reaction from fructose-1,6-bisphosphate to fructose-6-phosphate and inorganic phosphate, to regenerate the primary CO(2) acceptor molecule, ribulose-1,5-bisphosphate. Involved in the regulation of photosynthetic performance and sucrose synthesis. This Oryza sativa subsp. indica (Rice) protein is Fructose-1,6-bisphosphatase, chloroplastic.